The primary structure comprises 280 residues: Hydroxyethylthiazole kinase (280 aa).

Met-58 lines the substrate pocket. Arg-129 contacts ATP. Ala-206 provides a ligand contact to substrate.

Belongs to the Thz kinase family. The cofactor is Mg(2+).

The catalysed reaction is 5-(2-hydroxyethyl)-4-methylthiazole + ATP = 4-methyl-5-(2-phosphooxyethyl)-thiazole + ADP + H(+). It participates in cofactor biosynthesis; thiamine diphosphate biosynthesis; 4-methyl-5-(2-phosphoethyl)-thiazole from 5-(2-hydroxyethyl)-4-methylthiazole: step 1/1. Functionally, thiazole kinase involved in thiamine salvage pathway. The chain is Hydroxyethylthiazole kinase (THIM) from Zea mays (Maize).